The chain runs to 376 residues: 23S rRNA (uracil(747)-C(5))-methyltransferase RlmC (376 aa).

[4Fe-4S] cluster-binding residues include Cys3, Cys11, Cys14, and Cys87. S-adenosyl-L-methionine contacts are provided by Gln212, Phe241, Glu262, and Asn307. The active-site Nucleophile is Cys334.

It belongs to the class I-like SAM-binding methyltransferase superfamily. RNA M5U methyltransferase family. RlmC subfamily.

It carries out the reaction uridine(747) in 23S rRNA + S-adenosyl-L-methionine = 5-methyluridine(747) in 23S rRNA + S-adenosyl-L-homocysteine + H(+). In terms of biological role, catalyzes the formation of 5-methyl-uridine at position 747 (m5U747) in 23S rRNA. This chain is 23S rRNA (uracil(747)-C(5))-methyltransferase RlmC, found in Yersinia pestis bv. Antiqua (strain Antiqua).